The sequence spans 157 residues: Protein-export protein SecB (157 aa).

Belongs to the SecB family. In terms of assembly, homotetramer, a dimer of dimers. One homotetramer interacts with 1 SecA dimer.

The protein localises to the cytoplasm. One of the proteins required for the normal export of preproteins out of the cell cytoplasm. It is a molecular chaperone that binds to a subset of precursor proteins, maintaining them in a translocation-competent state. It also specifically binds to its receptor SecA. The polypeptide is Protein-export protein SecB (Shewanella frigidimarina (strain NCIMB 400)).